The chain runs to 124 residues: Small ribosomal subunit protein uS12c (124 aa).

The disordered stretch occupies residues 104-124 (SGGVKDRTQRRSKYGVKKPKS). The segment covering 113 to 124 (RRSKYGVKKPKS) has biased composition (basic residues).

The protein belongs to the universal ribosomal protein uS12 family. As to quaternary structure, part of the 30S ribosomal subunit.

It is found in the plastid. The protein localises to the chloroplast. Its function is as follows. With S4 and S5 plays an important role in translational accuracy. Located at the interface of the 30S and 50S subunits. This chain is Small ribosomal subunit protein uS12c (rps12), found in Thalassiosira pseudonana (Marine diatom).